The sequence spans 275 residues: Formamidopyrimidine-DNA glycosylase (275 aa).

Pro2 serves as the catalytic Schiff-base intermediate with DNA. Residue Glu3 is the Proton donor of the active site. The Proton donor; for beta-elimination activity role is filled by Lys58. Residues His93, Arg111, and Arg156 each coordinate DNA. An FPG-type zinc finger spans residues 241–275; the sequence is FVYDRAGQPCRVCNTPIRQIVQGQRSTYFCPTCQR. The active-site Proton donor; for delta-elimination activity is the Arg265.

This sequence belongs to the FPG family. As to quaternary structure, monomer. The cofactor is Zn(2+).

It catalyses the reaction Hydrolysis of DNA containing ring-opened 7-methylguanine residues, releasing 2,6-diamino-4-hydroxy-5-(N-methyl)formamidopyrimidine.. The enzyme catalyses 2'-deoxyribonucleotide-(2'-deoxyribose 5'-phosphate)-2'-deoxyribonucleotide-DNA = a 3'-end 2'-deoxyribonucleotide-(2,3-dehydro-2,3-deoxyribose 5'-phosphate)-DNA + a 5'-end 5'-phospho-2'-deoxyribonucleoside-DNA + H(+). Functionally, involved in base excision repair of DNA damaged by oxidation or by mutagenic agents. Acts as a DNA glycosylase that recognizes and removes damaged bases. Has a preference for oxidized purines, such as 7,8-dihydro-8-oxoguanine (8-oxoG). Has AP (apurinic/apyrimidinic) lyase activity and introduces nicks in the DNA strand. Cleaves the DNA backbone by beta-delta elimination to generate a single-strand break at the site of the removed base with both 3'- and 5'-phosphates. In Burkholderia lata (strain ATCC 17760 / DSM 23089 / LMG 22485 / NCIMB 9086 / R18194 / 383), this protein is Formamidopyrimidine-DNA glycosylase.